The primary structure comprises 427 residues: Probable glucuronosyltransferase Os03g0107900 (427 aa).

Topologically, residues Met1–Ser33 are cytoplasmic. A helical; Signal-anchor for type II membrane protein membrane pass occupies residues Thr34–Ala54. At Thr55–Arg427 the chain is on the lumenal side. Asn136, Asn168, Asn264, and Asn374 each carry an N-linked (GlcNAc...) asparagine glycan.

It belongs to the glycosyltransferase 47 family.

It is found in the golgi apparatus membrane. Functionally, involved in the synthesis of glucuronoxylan hemicellulose in secondary cell walls. The protein is Probable glucuronosyltransferase Os03g0107900 of Oryza sativa subsp. japonica (Rice).